The primary structure comprises 377 residues: Cell division cycle-associated protein 7 (377 aa).

Disordered stretches follow at residues 58–113 (RTRS…EEDG) and 144–211 (IFSG…EEDK). Over residues 76 to 100 (PARNTRRAANTKAAPPKPSESSAND) the composition is skewed to low complexity. Positions 148–173 (RHSLPGHRTKDSKSPRRRTFPGVASR) are interaction with MYC. Residues 163–179 (RRRTFPGVASRRNPERR) carry the Nuclear localization signal motif. Phosphothreonine is present on threonine 166. At serine 193 the chain carries Phosphoserine. Residue threonine 199 is modified to Phosphothreonine. The segment covering 199-210 (TEEEEDEEEEED) has biased composition (acidic residues). Lysine 211 participates in a covalent cross-link: Glycyl lysine isopeptide (Lys-Gly) (interchain with G-Cter in SUMO2). Serine 220 bears the Phosphoserine mark. The interval 253-377 (EEEIRNICSN…SLKQEFEMQA (125 aa)) is mediates transcriptional activity.

In terms of assembly, interacts with MYC (via C-terminus), YWHAE and YWHAZ. Phosphorylation at Thr-166 promotes interaction with YWHAE and YWHAZ, dissociation from MYC and sequestration in the cytoplasm.

The protein resides in the nucleus. It localises to the cytoplasm. Participates in MYC-mediated cell transformation and apoptosis; induces anchorage-independent growth and clonogenicity in lymphoblastoid cells. Insufficient to induce tumorigenicity when overexpressed but contributes to MYC-mediated tumorigenesis. May play a role as transcriptional regulator. The chain is Cell division cycle-associated protein 7 (Cdca7) from Rattus norvegicus (Rat).